The following is a 282-amino-acid chain: tRNA (guanine-N(7)-)-methyltransferase (282 aa).

A disordered region spans residues 1-31; sequence MSLTDDQASKRQAYRAAKEANRKELKHVKID. Positions 16–31 are enriched in basic and acidic residues; it reads AAKEANRKELKHVKID. S-adenosyl-L-methionine is bound by residues Gly-99, 122-123, 157-158, and Cys-177; these read EI and NA. Asp-180 is an active-site residue. 255–257 contributes to the S-adenosyl-L-methionine binding site; it reads TEE.

This sequence belongs to the class I-like SAM-binding methyltransferase superfamily. TrmB family. As to quaternary structure, forms a complex with TRM82.

The protein localises to the nucleus. It carries out the reaction guanosine(46) in tRNA + S-adenosyl-L-methionine = N(7)-methylguanosine(46) in tRNA + S-adenosyl-L-homocysteine. Its pathway is tRNA modification; N(7)-methylguanine-tRNA biosynthesis. Its function is as follows. Catalyzes the formation of N(7)-methylguanine at position 46 (m7G46) in tRNA. The polypeptide is tRNA (guanine-N(7)-)-methyltransferase (Eremothecium gossypii (strain ATCC 10895 / CBS 109.51 / FGSC 9923 / NRRL Y-1056) (Yeast)).